A 310-amino-acid chain; its full sequence is Olfactory receptor 2A12 (310 aa).

The Extracellular segment spans residues 1-24 (MESNQTWITEVILLGFQVDPALEL). A glycan (N-linked (GlcNAc...) asparagine) is linked at N4. The chain crosses the membrane as a helical span at residues 25–48 (FLFGFFLLFYSLTLMGNGIILGLI). The Cytoplasmic portion of the chain corresponds to 49-56 (YLDSRLHT). Residues 57 to 78 (PMYVFLSHLAIVDMSYASSTVP) form a helical membrane-spanning segment. Residues 79–99 (KMLANLVMHKKVISFAPCILQ) lie on the Extracellular side of the membrane. C96 and C188 form a disulfide bridge. Residues 100-119 (TFLYLAFAITECLILVMMCY) form a helical membrane-spanning segment. Residues 120 to 138 (DRYVAICHPLQYTLIMNWR) lie on the Cytoplasmic side of the membrane. Residues 139-157 (VCTVLASTCWIFSFLLALV) traverse the membrane as a helical segment. Topologically, residues 158-194 (HITLILRLPFCGPQKINHFFCQIMSVFKLACADTRLN) are extracellular. A helical transmembrane segment spans residues 195–218 (QVVLFAGSAFILVGPLCLVLVSYL). At 219 to 235 (HILVAILRIQSGEGRRK) the chain is on the cytoplasmic side. The helical transmembrane segment at 236 to 258 (AFSTCSSHLCVVGLFFGSAIVMY) threads the bilayer. At 259 to 271 (MAPKSSHSQERRK) the chain is on the extracellular side. A helical transmembrane segment spans residues 272 to 291 (ILSLFYSLFNPILNPLIYSL). The Cytoplasmic segment spans residues 292 to 310 (RNAEVKGALKRVLWKQRSM).

This sequence belongs to the G-protein coupled receptor 1 family.

The protein resides in the cell membrane. Functionally, odorant receptor. This is Olfactory receptor 2A12 (OR2A12) from Homo sapiens (Human).